We begin with the raw amino-acid sequence, 286 residues long: ATP synthase gamma chain (286 aa).

It belongs to the ATPase gamma chain family. In terms of assembly, F-type ATPases have 2 components, CF(1) - the catalytic core - and CF(0) - the membrane proton channel. CF(1) has five subunits: alpha(3), beta(3), gamma(1), delta(1), epsilon(1). CF(0) has three main subunits: a, b and c.

Its subcellular location is the cell inner membrane. Produces ATP from ADP in the presence of a proton gradient across the membrane. The gamma chain is believed to be important in regulating ATPase activity and the flow of protons through the CF(0) complex. In Pseudomonas aeruginosa (strain UCBPP-PA14), this protein is ATP synthase gamma chain.